The sequence spans 286 residues: Polyamine aminopropyltransferase (286 aa).

The 234-residue stretch at 5-238 (KTWHEKLYCH…GVMVFAWGTN (234 aa)) folds into the PABS domain. 2 residues coordinate spermidine: His64 and Asp88. Residues Glu108 and 140-141 (DG) each bind S-methyl-5'-thioadenosine. Asp158 functions as the Proton acceptor in the catalytic mechanism. 158 to 161 (DSTD) contributes to the spermidine binding site.

It belongs to the spermidine/spermine synthase family. As to quaternary structure, homodimer or homotetramer.

It is found in the cytoplasm. The enzyme catalyses S-adenosyl 3-(methylsulfanyl)propylamine + putrescine = S-methyl-5'-thioadenosine + spermidine + H(+). Its pathway is amine and polyamine biosynthesis; spermidine biosynthesis; spermidine from putrescine: step 1/1. Catalyzes the irreversible transfer of a propylamine group from the amino donor S-adenosylmethioninamine (decarboxy-AdoMet) to putrescine (1,4-diaminobutane) to yield spermidine. The protein is Polyamine aminopropyltransferase of Buchnera aphidicola subsp. Acyrthosiphon pisum (strain 5A).